The primary structure comprises 564 residues: Dihydroxy-acid dehydratase (564 aa).

Aspartate 78 provides a ligand contact to Mg(2+). Cysteine 119 is a [2Fe-2S] cluster binding site. Aspartate 120 and lysine 121 together coordinate Mg(2+). Residue lysine 121 is modified to N6-carboxylysine. A [2Fe-2S] cluster-binding site is contributed by cysteine 192. Glutamate 451 serves as a coordination point for Mg(2+). The active-site Proton acceptor is the serine 477.

It belongs to the IlvD/Edd family. Homodimer. The cofactor is [2Fe-2S] cluster. Mg(2+) is required as a cofactor.

The enzyme catalyses (2R)-2,3-dihydroxy-3-methylbutanoate = 3-methyl-2-oxobutanoate + H2O. It catalyses the reaction (2R,3R)-2,3-dihydroxy-3-methylpentanoate = (S)-3-methyl-2-oxopentanoate + H2O. It participates in amino-acid biosynthesis; L-isoleucine biosynthesis; L-isoleucine from 2-oxobutanoate: step 3/4. Its pathway is amino-acid biosynthesis; L-valine biosynthesis; L-valine from pyruvate: step 3/4. In terms of biological role, functions in the biosynthesis of branched-chain amino acids. Catalyzes the dehydration of (2R,3R)-2,3-dihydroxy-3-methylpentanoate (2,3-dihydroxy-3-methylvalerate) into 2-oxo-3-methylpentanoate (2-oxo-3-methylvalerate) and of (2R)-2,3-dihydroxy-3-methylbutanoate (2,3-dihydroxyisovalerate) into 2-oxo-3-methylbutanoate (2-oxoisovalerate), the penultimate precursor to L-isoleucine and L-valine, respectively. The protein is Dihydroxy-acid dehydratase of Nitratiruptor sp. (strain SB155-2).